A 213-amino-acid polypeptide reads, in one-letter code: Uridine kinase (213 aa).

15–22 (GASASGKS) contributes to the ATP binding site.

It belongs to the uridine kinase family.

It localises to the cytoplasm. It carries out the reaction uridine + ATP = UMP + ADP + H(+). The enzyme catalyses cytidine + ATP = CMP + ADP + H(+). The protein operates within pyrimidine metabolism; CTP biosynthesis via salvage pathway; CTP from cytidine: step 1/3. It participates in pyrimidine metabolism; UMP biosynthesis via salvage pathway; UMP from uridine: step 1/1. The sequence is that of Uridine kinase from Serratia proteamaculans (strain 568).